The following is a 184-amino-acid chain: Photosystem I assembly protein Ycf4 (184 aa).

2 consecutive transmembrane segments (helical) span residues 19 to 39 and 57 to 77; these read LSNFCWALILFLGSLGFLLVG and FIFFPQGIVMSFYGIAGLFIS.

It belongs to the Ycf4 family.

It is found in the plastid. The protein localises to the chloroplast thylakoid membrane. Seems to be required for the assembly of the photosystem I complex. The chain is Photosystem I assembly protein Ycf4 from Jasminum nudiflorum (Winter jasmine).